The following is a 152-amino-acid chain: Smith-Magenis syndrome chromosomal region candidate gene 5 protein homolog (152 aa).

The tract at residues 41-77 (TPCAGPSSQAPPQPPQASPPAAPDHSRTPSLLASSHS) is disordered. Residues 49–62 (QAPPQPPQASPPAA) are compositionally biased toward pro residues.

The chain is Smith-Magenis syndrome chromosomal region candidate gene 5 protein homolog (SMCR5) from Macaca fascicularis (Crab-eating macaque).